Here is a 502-residue protein sequence, read N- to C-terminus: Type II secretion system protein E (502 aa).

263–270 (GPTGSGKT) contacts ATP. Cys-396, Cys-399, Cys-429, and Cys-432 together coordinate Zn(2+). A disordered region spans residues 461-480 (SSEQEMTRHARTSGPSIRDD).

It belongs to the GSP E family. Homodimer. Dimerization is directed by a relatively short domain near the extreme N-terminus and is essential for extracellular protein secretion. May form homooligomers. Interacts with XcpY/GspL. Forms an inner membrane platform subcomplex with XcpS/GspF, XcpY/GspL and XcpZ/GspM. Requires Zn(2+) as cofactor.

It is found in the cell inner membrane. The enzyme catalyses ATP + H2O + cellular proteinSide 1 = ADP + phosphate + cellular proteinSide 2.. In terms of biological role, ATPase component of the type II secretion system required for the energy-dependent secretion of extracellular factors such as proteases and toxins from the periplasm. Acts as a molecular motor to provide the energy that is required for assembly of the pseudopilus and the extrusion of substrates generated in the cytoplasm. This is Type II secretion system protein E (xcpR) from Pseudomonas aeruginosa (strain ATCC 15692 / DSM 22644 / CIP 104116 / JCM 14847 / LMG 12228 / 1C / PRS 101 / PAO1).